A 288-amino-acid polypeptide reads, in one-letter code: UTP--glucose-1-phosphate uridylyltransferase (288 aa).

It belongs to the UDPGP type 2 family.

It catalyses the reaction alpha-D-glucose 1-phosphate + UTP + H(+) = UDP-alpha-D-glucose + diphosphate. Its pathway is glycolipid metabolism; diglucosyl-diacylglycerol biosynthesis. Its function is as follows. Catalyzes the formation of UDP-glucose from glucose-1-phosphate and UTP. This is an intermediate step in the biosynthesis of diglucosyl-diacylglycerol (Glc2-DAG), i.e. the predominant glycolipid found in the S.aureus membrane, which is also used as a membrane anchor for lipoteichoic acid (LTA). The polypeptide is UTP--glucose-1-phosphate uridylyltransferase (gtaB) (Staphylococcus aureus (strain MRSA252)).